Here is a 79-residue protein sequence, read N- to C-terminus: Sec-independent protein translocase protein TatA (79 aa).

The helical transmembrane segment at 1–21 (MGGWSSPSHWLIILLIVVLLF) threads the bilayer. A compositionally biased stretch (basic and acidic residues) spans 52-61 (KNTQKIEENK). The interval 52–79 (KNTQKIEENKNTTNNTSADASIDKTKKA) is disordered.

The protein belongs to the TatA/E family. The Tat system comprises two distinct complexes: a TatABC complex, containing multiple copies of TatA, TatB and TatC subunits, and a separate TatA complex, containing only TatA subunits. Substrates initially bind to the TatABC complex, which probably triggers association of the separate TatA complex to form the active translocon.

The protein localises to the cell inner membrane. Part of the twin-arginine translocation (Tat) system that transports large folded proteins containing a characteristic twin-arginine motif in their signal peptide across membranes. TatA could form the protein-conducting channel of the Tat system. In Campylobacter jejuni subsp. jejuni serotype O:6 (strain 81116 / NCTC 11828), this protein is Sec-independent protein translocase protein TatA.